The chain runs to 62 residues: Short neurotoxin B (62 aa).

The segment covering 1–16 (RRCFNHPSSQPQTNKS) has biased composition (polar residues). The disordered stretch occupies residues 1–21 (RRCFNHPSSQPQTNKSCPPGE). 4 cysteine pairs are disulfide-bonded: Cys3/Cys24, Cys17/Cys41, Cys43/Cys54, and Cys55/Cys60.

Belongs to the three-finger toxin family. Short-chain subfamily. Type I alpha-neurotoxin sub-subfamily. Expressed by the venom gland.

It localises to the secreted. Functionally, binds to muscle nicotinic acetylcholine receptor (nAChR) and inhibit acetylcholine from binding to the receptor, thereby impairing neuromuscular transmission. This chain is Short neurotoxin B, found in Laticauda crockeri (Crocker's sea snake).